The chain runs to 130 residues: Small ribosomal subunit protein uS8A (130 aa).

The protein belongs to the universal ribosomal protein uS8 family. In terms of assembly, component of the small ribosomal subunit (SSU). Mature yeast ribosomes consist of a small (40S) and a large (60S) subunit. The 40S small subunit contains 1 molecule of ribosomal RNA (18S rRNA) and 33 different proteins (encoded by 57 genes). The large 60S subunit contains 3 rRNA molecules (25S, 5.8S and 5S rRNA) and 46 different proteins (encoded by 81 genes).

Its subcellular location is the cytoplasm. Functionally, component of the ribosome, a large ribonucleoprotein complex responsible for the synthesis of proteins in the cell. The small ribosomal subunit (SSU) binds messenger RNAs (mRNAs) and translates the encoded message by selecting cognate aminoacyl-transfer RNA (tRNA) molecules. The large subunit (LSU) contains the ribosomal catalytic site termed the peptidyl transferase center (PTC), which catalyzes the formation of peptide bonds, thereby polymerizing the amino acids delivered by tRNAs into a polypeptide chain. The nascent polypeptides leave the ribosome through a tunnel in the LSU and interact with protein factors that function in enzymatic processing, targeting, and the membrane insertion of nascent chains at the exit of the ribosomal tunnel. This Saccharomyces cerevisiae (strain ATCC 204508 / S288c) (Baker's yeast) protein is Small ribosomal subunit protein uS8A.